The following is a 734-amino-acid chain: MADKYIVEEAEALAKRALHSPIAQATPIYEQLLSLYPTSARFWKQYVEAQMAVNNDDATKQIFSRCLLTCLQVPLWQCYIRFIRKVYDKKGAEGQEETTKAFEFMLNYIGTDIASGPIWTEYIAFLKSLPALNLNEDLHRKTALRKVYHRAILTPTHHVEQLWKDYENFENTVNRQLAKGLVNEYQPKFNSARAVYRERKKYIEEIDWNMLAVPPTGTSKEETQWVAWKKFLSFEKGNPQRIDTASSTKRIIYAYEQCLMCLYHYPDVWYDYAEWHVKSGSTDAAIKVFQRALKAIPDSEMLKYAFAEMEESRGAIQSAKKLYENILGASTNSLAHIQYLRFLRRAEGVEAARKYFLDARKSPSCTYHVYIAFATMAFCIDKEPKVAHNIFEEGLKLYMSEPVYILKYADFLTRLNDDRNIRALFERALSTLPVEDSAEVWKRFIQFEQTYGDLASILKVEQRMKEALSGKGEEGSSPPESSLQDVVSRYSYMDLWPCTSNDLDHLARQELLVKNLNKKAGKTNLPHVPAAIGSVASSSKVVYPDTSQMVVQDPTKKSEFASSANPVAASASNTFPSTVTATATHGSASTFDEIPKTTPPALVAFLANLPIVDGPTPNVDVVLSICLQSDFPTGQTVKQSFAAKGNPPSQNDPSGPTRGVSQRLPRDRRATKRKDSDRQEEDDTATVQSQPLPTDVFRLRQMRKARGIATSSQTPTGSTSYGSAFSGELSGSTG.

12 HAT repeats span residues 20-52, 54-85, 93-128, 139-172, 198-237, 246-278, 280-312, 314-345, 347-379, 382-414, 416-450, and 474-505; these read SPIA…AQMA, NNDD…FIRK, EGQE…FLKS, HRKT…FENT, ERKK…FEKG, SSTK…WHVK, GSTD…MEES, GAIQ…FLRR, EGVE…MAFC, KEPK…FLTR, NDDR…FEQT, and EGSS…DLDH. Residues 637–734 are disordered; that stretch reads VKQSFAAKGN…FSGELSGSTG (98 aa). Residues 664–677 are compositionally biased toward basic and acidic residues; that stretch reads LPRDRRATKRKDSD. The segment covering 709–734 has biased composition (polar residues); that stretch reads ATSSQTPTGSTSYGSAFSGELSGSTG.

In terms of assembly, homodimer. Belongs to the CSTF complex. Forms a complex with cleavage and polyadenylation specificity factor (CPSF) subunits CPSF30, CSTF64, PCFS1, PCFS5 and FIPS5.

It is found in the nucleus. Functionally, one of the multiple factors required for polyadenylation and 3'-end cleavage of pre-mRNAs. Required for the targeted 3' processing of antisense transcripts that triggers transcriptional silencing of the corresponding sense gene. The chain is Cleavage stimulation factor subunit 77 from Arabidopsis thaliana (Mouse-ear cress).